A 274-amino-acid chain; its full sequence is 4-diphosphocytidyl-2-C-methyl-D-erythritol kinase (274 aa).

Lys7 is an active-site residue. 90–100 (PMGGGLGGGSS) lines the ATP pocket. Asp132 is an active-site residue.

This sequence belongs to the GHMP kinase family. IspE subfamily.

It carries out the reaction 4-CDP-2-C-methyl-D-erythritol + ATP = 4-CDP-2-C-methyl-D-erythritol 2-phosphate + ADP + H(+). It participates in isoprenoid biosynthesis; isopentenyl diphosphate biosynthesis via DXP pathway; isopentenyl diphosphate from 1-deoxy-D-xylulose 5-phosphate: step 3/6. Catalyzes the phosphorylation of the position 2 hydroxy group of 4-diphosphocytidyl-2C-methyl-D-erythritol. This Dechloromonas aromatica (strain RCB) protein is 4-diphosphocytidyl-2-C-methyl-D-erythritol kinase.